We begin with the raw amino-acid sequence, 165 residues long: Cyclic pyranopterin monophosphate synthase (165 aa).

Residues 83 to 85 (FCH) and 120 to 121 (ME) contribute to the substrate site. The active site involves Asp135.

Belongs to the MoaC family. In terms of assembly, homohexamer; trimer of dimers.

The catalysed reaction is (8S)-3',8-cyclo-7,8-dihydroguanosine 5'-triphosphate = cyclic pyranopterin phosphate + diphosphate. Its pathway is cofactor biosynthesis; molybdopterin biosynthesis. Catalyzes the conversion of (8S)-3',8-cyclo-7,8-dihydroguanosine 5'-triphosphate to cyclic pyranopterin monophosphate (cPMP). The chain is Cyclic pyranopterin monophosphate synthase from Xanthomonas oryzae pv. oryzae (strain MAFF 311018).